Consider the following 53-residue polypeptide: UPF0181 protein VC_A0569 (53 aa).

It belongs to the UPF0181 family.

This is UPF0181 protein VC_A0569 from Vibrio cholerae serotype O1 (strain ATCC 39315 / El Tor Inaba N16961).